The following is a 328-amino-acid chain: PDZ and LIM domain protein 1 (328 aa).

Threonine 2 bears the N-acetylthreonine mark. The PDZ domain occupies 3–85 (TLQIVLQGPG…NMTLTVARSE (83 aa)). Serine 90 and serine 130 each carry phosphoserine. Tyrosine 144 bears the Phosphotyrosine mark. In terms of domain architecture, LIM zinc-binding spans 257–316 (PMCDKCGTGIVGVFVKLRERHRHPECYVCTDCGTNLKQKGHFFVEDQIYCEKHARERVTP). The Zn(2+) site is built by cysteine 259, cysteine 262, histidine 279, cysteine 282, cysteine 285, cysteine 288, cysteine 306, and histidine 309. Threonine 315 bears the Phosphothreonine mark. Tyrosine 320 carries the post-translational modification Phosphotyrosine.

In terms of assembly, interacts with ACTN1, ACTN2 and ACTN4. Interacts with PDLIM4.

It localises to the cytoplasm. The protein localises to the cytoskeleton. The protein resides in the myofibril. It is found in the sarcomere. Its subcellular location is the z line. Functionally, cytoskeletal protein that may act as an adapter that brings other proteins (like kinases) to the cytoskeleton. Involved in assembly, disassembly and directioning of stress fibers in fibroblasts. Required for the localization of ACTN1 and PALLD to stress fibers. Required for cell migration and in maintaining cell polarity of fibroblasts. In Bos taurus (Bovine), this protein is PDZ and LIM domain protein 1 (PDLIM1).